Here is a 118-residue protein sequence, read N- to C-terminus: DNA-directed RNA polymerase subunit omega (118 aa).

This sequence belongs to the RNA polymerase subunit omega family. In terms of assembly, the RNAP catalytic core consists of 2 alpha, 1 beta, 1 beta' and 1 omega subunit. When a sigma factor is associated with the core the holoenzyme is formed, which can initiate transcription.

The enzyme catalyses RNA(n) + a ribonucleoside 5'-triphosphate = RNA(n+1) + diphosphate. Its function is as follows. Promotes RNA polymerase assembly. Latches the N- and C-terminal regions of the beta' subunit thereby facilitating its interaction with the beta and alpha subunits. In Paracoccus denitrificans (strain Pd 1222), this protein is DNA-directed RNA polymerase subunit omega.